Reading from the N-terminus, the 264-residue chain is S-adenosylmethionine decarboxylase proenzyme (264 aa).

The active-site Schiff-base intermediate with substrate; via pyruvic acid is Ser-113. Ser-113 is modified (pyruvic acid (Ser); by autocatalysis). The active-site Proton acceptor; for processing activity is the His-118. The active-site Proton donor; for catalytic activity is the Cys-141.

The protein belongs to the prokaryotic AdoMetDC family. Type 2 subfamily. In terms of assembly, heterooctamer of four alpha and four beta chains arranged as a tetramer of alpha/beta heterodimers. The cofactor is pyruvate. Post-translationally, is synthesized initially as an inactive proenzyme. Formation of the active enzyme involves a self-maturation process in which the active site pyruvoyl group is generated from an internal serine residue via an autocatalytic post-translational modification. Two non-identical subunits are generated from the proenzyme in this reaction, and the pyruvate is formed at the N-terminus of the alpha chain, which is derived from the carboxyl end of the proenzyme. The post-translation cleavage follows an unusual pathway, termed non-hydrolytic serinolysis, in which the side chain hydroxyl group of the serine supplies its oxygen atom to form the C-terminus of the beta chain, while the remainder of the serine residue undergoes an oxidative deamination to produce ammonia and the pyruvoyl group blocking the N-terminus of the alpha chain.

It catalyses the reaction S-adenosyl-L-methionine + H(+) = S-adenosyl 3-(methylsulfanyl)propylamine + CO2. It participates in amine and polyamine biosynthesis; S-adenosylmethioninamine biosynthesis; S-adenosylmethioninamine from S-adenosyl-L-methionine: step 1/1. Functionally, catalyzes the decarboxylation of S-adenosylmethionine to S-adenosylmethioninamine (dcAdoMet), the propylamine donor required for the synthesis of the polyamines spermine and spermidine from the diamine putrescine. The chain is S-adenosylmethionine decarboxylase proenzyme from Xanthomonas euvesicatoria pv. vesicatoria (strain 85-10) (Xanthomonas campestris pv. vesicatoria).